Reading from the N-terminus, the 230-residue chain is UPF0173 metal-dependent hydrolase OEOE_1287 (230 aa).

It belongs to the UPF0173 family.

This chain is UPF0173 metal-dependent hydrolase OEOE_1287, found in Oenococcus oeni (strain ATCC BAA-331 / PSU-1).